The chain runs to 262 residues: Lipoate-protein ligase A subunit 1 (262 aa).

Residues 30-226 (YGDKPILRFY…GFSETLHIDF (197 aa)) enclose the BPL/LPL catalytic domain. The ATP site is built by arginine 72, glycine 77, tyrosine 80, aspartate 85, proline 132, and lysine 135. The Mg(2+) site is built by threonine 137 and aspartate 138. Residues lysine 145, alanine 149, and alanine 163 each coordinate ATP. Residue lysine 145 participates in (R)-lipoate binding. Alanine 149 contributes to the Mg(2+) binding site.

The protein belongs to the LplA family. As to quaternary structure, heterodimer composed of LplA and LplB.

The protein localises to the cytoplasm. The catalysed reaction is L-lysyl-[lipoyl-carrier protein] + (R)-lipoate + ATP = N(6)-[(R)-lipoyl]-L-lysyl-[lipoyl-carrier protein] + AMP + diphosphate + H(+). It functions in the pathway protein modification; protein lipoylation via exogenous pathway; protein N(6)-(lipoyl)lysine from lipoate: step 1/2. Its pathway is protein modification; protein lipoylation via exogenous pathway; protein N(6)-(lipoyl)lysine from lipoate: step 2/2. In terms of biological role, part of a lipoate-protein ligase complex that catalyzes both the ATP-dependent activation of exogenously supplied lipoate to lipoyl-AMP and the transfer of the activated lipoyl onto the lipoyl domains of lipoate-dependent enzymes. Can also use octanoate as substrate. In Thermoplasma acidophilum (strain ATCC 25905 / DSM 1728 / JCM 9062 / NBRC 15155 / AMRC-C165), this protein is Lipoate-protein ligase A subunit 1 (lplA).